The sequence spans 259 residues: Small ribosomal subunit protein uS2 (259 aa).

The interval 228–259 (VSFGSEEAEENNQKEDNEEIFEIEDVDESEEM) is disordered. A compositionally biased stretch (acidic residues) spans 233-259 (EEAEENNQKEDNEEIFEIEDVDESEEM).

The protein belongs to the universal ribosomal protein uS2 family.

In Thermosipho africanus (strain TCF52B), this protein is Small ribosomal subunit protein uS2.